The chain runs to 865 residues: Protein translocase subunit SecA (865 aa).

Residues Gln93, 111–115 (GEGKT), and Asp501 each bind ATP. The Zn(2+) site is built by Cys841, Cys843, Cys852, and Cys853.

It belongs to the SecA family. In terms of assembly, monomer and homodimer. Part of the essential Sec protein translocation apparatus which comprises SecA, SecYEG and auxiliary proteins SecDF-YajC and YidC. Requires Zn(2+) as cofactor.

It localises to the cell inner membrane. It is found in the cytoplasm. The enzyme catalyses ATP + H2O + cellular proteinSide 1 = ADP + phosphate + cellular proteinSide 2.. Its function is as follows. Part of the Sec protein translocase complex. Interacts with the SecYEG preprotein conducting channel. Has a central role in coupling the hydrolysis of ATP to the transfer of proteins into and across the cell membrane, serving as an ATP-driven molecular motor driving the stepwise translocation of polypeptide chains across the membrane. This Helicobacter pylori (strain J99 / ATCC 700824) (Campylobacter pylori J99) protein is Protein translocase subunit SecA.